Here is a 1171-residue protein sequence, read N- to C-terminus: ATP-dependent helicase/deoxyribonuclease subunit B (1171 aa).

The UvrD-like helicase ATP-binding domain maps to methionine 1–alanine 390. Glycine 8–serine 15 provides a ligand contact to ATP. The UvrD-like helicase C-terminal domain occupies methionine 281 to aspartate 587. Residues cysteine 805, cysteine 1129, cysteine 1132, and cysteine 1138 each contribute to the [4Fe-4S] cluster site.

Belongs to the helicase family. AddB/RexB type 1 subfamily. As to quaternary structure, heterodimer of AddA and AddB. Requires Mg(2+) as cofactor. [4Fe-4S] cluster serves as cofactor.

Its function is as follows. The heterodimer acts as both an ATP-dependent DNA helicase and an ATP-dependent, dual-direction single-stranded exonuclease. Recognizes the chi site generating a DNA molecule suitable for the initiation of homologous recombination. The AddB subunit has 5' -&gt; 3' nuclease activity but not helicase activity. The protein is ATP-dependent helicase/deoxyribonuclease subunit B of Bacillus cereus (strain ATCC 14579 / DSM 31 / CCUG 7414 / JCM 2152 / NBRC 15305 / NCIMB 9373 / NCTC 2599 / NRRL B-3711).